The primary structure comprises 298 residues: Inosose dehydratase (298 aa).

Belongs to the IolE/MocC family. Glutathione is required as a cofactor. It depends on Co(2+) as a cofactor. Mn(2+) serves as cofactor.

It carries out the reaction scyllo-inosose = 3D-3,5/4-trihydroxycyclohexane-1,2-dione + H2O. It functions in the pathway polyol metabolism; myo-inositol degradation into acetyl-CoA; acetyl-CoA from myo-inositol: step 2/7. Its function is as follows. Catalyzes the dehydration of inosose (2-keto-myo-inositol, 2KMI or 2,4,6/3,5-pentahydroxycyclohexanone) to 3D-(3,5/4)-trihydroxycyclohexane-1,2-dione (D-2,3-diketo-4-deoxy-epi-inositol). The polypeptide is Inosose dehydratase (Bacillus thuringiensis (strain Al Hakam)).